We begin with the raw amino-acid sequence, 197 residues long: EF-hand calcium-binding domain-containing protein 9 (197 aa).

Ca(2+) contacts are provided by D58 and D69. EF-hand domains lie at 59-94, 100-135, and 136-171; these read LKKAQINIVFDMLDWNAVGEIDFEKFYMLVCMLLAH, GQFMYRHSRPVFDLLDLKGDLRIGAKNFEMYRFLFN, and IQKQELKDLFRDFDITGDNRLNYQEFKLYTIIYTDK. Residues D149, D153, R155, and E160 each coordinate Ca(2+). Residues 177 to 188 show a composition bias toward basic and acidic residues; it reads KTEEKEKGERKR. The disordered stretch occupies residues 177–197; it reads KTEEKEKGERKRSLYSKCHIK.

As to quaternary structure, component of the CatSper complex or CatSpermasome composed of the core pore-forming members CATSPER1, CATSPER2, CATSPER3 and CATSPER4 as well as auxiliary members CATSPERB, CATSPERG, CATSPERD, CATSPERE, CATSPERZ, C2CD6/CATSPERT, TMEM249, TMEM262 and EFCAB9. HSPA1 may be an additional auxiliary complex member. The core complex members CATSPER1, CATSPER2, CATSPER3 and CATSPER4 form a heterotetrameric channel. The auxiliary CATSPERB, CATSPERG, CATSPERD and CATSPERE subunits form a pavilion-like structure over the pore which stabilizes the complex through interactions with CATSPER4, CATSPER3, CATSPER1 and CATSPER2 respectively. TMEM262/CATSPERH interacts with CATSPERB, further stabilizing the complex. C2CD6/CATSPERT interacts at least with CATSPERD and is required for targeting the CatSper complex in the flagellar membrane. Interacts with CATSPERZ; the interaction is direct, Ca(2+)-dependent and connects EFCAB9 with the CatSper complex. Dissociates from CATSPERZ at elevated pH.

The protein resides in the cytoplasm. The protein localises to the cell projection. It localises to the cilium. It is found in the flagellum. In terms of biological role, auxiliary component of the CatSper complex, a complex involved in sperm cell hyperactivation. pH-dependent Ca(2+) sensor required to activate the CatSper channel. Sperm cell hyperactivation is needed for sperm motility which is essential late in the preparation of sperm for fertilization. Associates with the CatSper complex via direct interaction with CATSPERZ, and senses intracellular Ca(2+). Together with CATSPERZ, associates with the CatSper channel pore and is required for the two-row structure of each single CatSper channel. In Homo sapiens (Human), this protein is EF-hand calcium-binding domain-containing protein 9.